The chain runs to 445 residues: Glucose-6-phosphate isomerase 2 (445 aa).

Residue Glu285 is the Proton donor of the active site. Active-site residues include His306 and Lys420.

This sequence belongs to the GPI family. As to quaternary structure, homodimer.

The protein resides in the cytoplasm. The catalysed reaction is alpha-D-glucose 6-phosphate = beta-D-fructose 6-phosphate. It participates in carbohydrate biosynthesis; gluconeogenesis. Its pathway is carbohydrate degradation; glycolysis; D-glyceraldehyde 3-phosphate and glycerone phosphate from D-glucose: step 2/4. Functionally, catalyzes the reversible isomerization of glucose-6-phosphate to fructose-6-phosphate. This is Glucose-6-phosphate isomerase 2 from Geobacillus stearothermophilus (Bacillus stearothermophilus).